The primary structure comprises 551 residues: Structure-specific endonuclease subunit MUS81 (551 aa).

Disordered regions lie at residues 85-131 and 231-255; these read LASG…AGYW and PEEH…EVGV. Ser95 carries the phosphoserine modification. Polar residues predominate over residues 110–131; the sequence is VQGSSMPVPTQPQAGSTNAGYW. The tract at residues 124–243 is interaction with BLM; that stretch reads GSTNAGYWPA…HHEESPVPEA (120 aa). A winged helix domain (WHD); critical for endonuclease activity region spans residues 131–230; it reads WPAQNSGARE…GLSTLNTAFQ (100 aa). Positions 270–372 constitute an ERCC4 domain; that stretch reads LLCVDIGETR…HRIYLVEEHG (103 aa). Catalysis depends on residues Asp274, Glu277, and Asp307. Residues Asp274, Glu277, Asp307, Glu333, and Arg334 each coordinate Mg(2+). Positions 471–545 are helix-hairpin-helix (2HhH); involved in DNA recognition and bending; that stretch reads VREVFARQLM…LSRTLYQLYC (75 aa).

This sequence belongs to the XPF family. Part of the heterodimeric DNA structure-specific endonuclease complex MUS81-EME1. Part of the heterodimeric DNA structure-specific endonuclease complex MUS81-EME2. Interacts with BLM; may stimulate the endonuclease activity of MUS81. Interacts with SLX4/BTBD12; this interaction is direct and links the MUS81-EME1 complex to SLX4, which may coordinate the action of the structure-specific endonuclease during DNA repair. Interacts with DCLRE1B/Apollo. Interacts with RECQL5; this interaction stimulates mitotic DNA synthesis. Interacts with CHEK2. Mg(2+) serves as cofactor.

The protein localises to the nucleus. It is found in the nucleolus. Its function is as follows. Catalytic subunit of two functionally distinct, structure-specific, heterodimeric DNA endonucleases MUS81-EME1 and MUS81-EME2 that are involved in the maintenance of genome stability. Both endonucleases have essentially the same substrate specificity though MUS81-EME2 is more active than its MUS81-EME1 counterpart. Both cleave 3'-flaps and nicked Holliday junctions, and exhibit limited endonuclease activity with 5' flaps and nicked double-stranded DNAs. MUS81-EME2 which is active during the replication of DNA is more specifically involved in replication fork processing. Replication forks frequently encounter obstacles to their passage, including DNA base lesions, DNA interstrand cross-links, difficult-to-replicate sequences, transcription bubbles, or tightly bound proteins. One mechanism for the restart of a stalled replication fork involves nucleolytic cleavage mediated by the MUS81-EME2 endonuclease. By acting upon the stalled fork, MUS81-EME2 generates a DNA double-strand break (DSB) that can be repaired by homologous recombination, leading to the restoration of an active fork. MUS81-EME2 could also function in telomere maintenance. MUS81-EME1, on the other hand, is active later in the cell cycle and functions in the resolution of mitotic recombination intermediates including the Holliday junctions, the four-way DNA intermediates that form during homologous recombination. In Rattus norvegicus (Rat), this protein is Structure-specific endonuclease subunit MUS81.